Here is a 296-residue protein sequence, read N- to C-terminus: Fructose-bisphosphate aldolase class 1 (296 aa).

E175 acts as the Proton acceptor in catalysis. K212 serves as the catalytic Schiff-base intermediate with dihydroxyacetone-P.

Belongs to the class I fructose-bisphosphate aldolase family.

It carries out the reaction beta-D-fructose 1,6-bisphosphate = D-glyceraldehyde 3-phosphate + dihydroxyacetone phosphate. Its pathway is carbohydrate degradation; glycolysis; D-glyceraldehyde 3-phosphate and glycerone phosphate from D-glucose: step 4/4. This Staphylococcus epidermidis (strain ATCC 12228 / FDA PCI 1200) protein is Fructose-bisphosphate aldolase class 1 (fda).